We begin with the raw amino-acid sequence, 109 residues long: Ribonuclease P protein component (109 aa).

This sequence belongs to the RnpA family. In terms of assembly, consists of a catalytic RNA component (M1 or rnpB) and a protein subunit.

It catalyses the reaction Endonucleolytic cleavage of RNA, removing 5'-extranucleotides from tRNA precursor.. In terms of biological role, RNaseP catalyzes the removal of the 5'-leader sequence from pre-tRNA to produce the mature 5'-terminus. It can also cleave other RNA substrates such as 4.5S RNA. The protein component plays an auxiliary but essential role in vivo by binding to the 5'-leader sequence and broadening the substrate specificity of the ribozyme. The sequence is that of Ribonuclease P protein component from Mycoplasma mycoides subsp. mycoides SC (strain CCUG 32753 / NCTC 10114 / PG1).